The chain runs to 651 residues: PTS system N-acetylglucosamine-specific EIICBA component (651 aa).

Residues 1–371 form the PTS EIIC type-1 domain; that stretch reads MNILGFFQRL…FNLKTPGRED (371 aa). A run of 12 helical transmembrane segments spans residues 16-36, 40-60, 70-90, 92-112, 132-152, 165-185, 192-212, 232-252, 264-284, 285-305, 308-328, and 339-359; these read LPIA…PDLL, FIAQ…AIGV, GSAA…MVTI, PEIN…GAVY, FVPI…GYVW, WIVS…RLLI, VLNT…GTVF, GFFP…YLAA, LLSV…EFLF, LFLA…SLFI, ALGI…VLMY, and MLLV…SAVI. The PTS EIIB type-1 domain maps to 390–472; that stretch reads TQLATSYIAA…KKVVTRGPVA (83 aa). Catalysis depends on cysteine 412, which acts as the Phosphocysteine intermediate; for EIIB activity. Cysteine 412 carries the post-translational modification Phosphocysteine; by EIIA. Residues 519–623 enclose the PTS EIIA type-1 domain; it reads DEAFASKAVG…SMISPVVCSN (105 aa). 2 residues coordinate Zn(2+): histidine 556 and histidine 571. Residue histidine 571 is the Tele-phosphohistidine intermediate; for EIIA activity of the active site. Phosphohistidine; by HPr is present on histidine 571.

Requires Zn(2+) as cofactor.

It is found in the cell inner membrane. It carries out the reaction N(pros)-phospho-L-histidyl-[protein] + N-acetyl-D-glucosamine(out) = N-acetyl-D-glucosamine 6-phosphate(in) + L-histidyl-[protein]. In terms of biological role, the phosphoenolpyruvate-dependent sugar phosphotransferase system (sugar PTS), a major carbohydrate active transport system, catalyzes the phosphorylation of incoming sugar substrates concomitantly with their translocation across the cell membrane. This system is involved in N-acetylglucosamine transport. The chain is PTS system N-acetylglucosamine-specific EIICBA component (nagE) from Klebsiella pneumoniae.